The primary structure comprises 255 residues: Taurine import ATP-binding protein TauB (255 aa).

The 228-residue stretch at 2–229 (LNVSGLWAEY…RYAEGEPCRA (228 aa)) folds into the ABC transporter domain. 34–41 (GPSGCGKT) is a binding site for ATP.

This sequence belongs to the ABC transporter superfamily. Taurine importer (TC 3.A.1.17.1) family. In terms of assembly, the complex is composed of two ATP-binding proteins (TauB), two transmembrane proteins (TauC) and a solute-binding protein (TauA).

The protein resides in the cell inner membrane. It catalyses the reaction taurine(out) + ATP + H2O = taurine(in) + ADP + phosphate + H(+). Functionally, part of the ABC transporter complex TauABC involved in taurine import. Responsible for energy coupling to the transport system. The protein is Taurine import ATP-binding protein TauB of Yersinia pseudotuberculosis serotype I (strain IP32953).